Here is a 712-residue protein sequence, read N- to C-terminus: Cyclomaltodextrin glucanotransferase (712 aa).

The first 27 residues, 1-27, serve as a signal peptide directing secretion; the sequence is MKRFMKLTAVWTLWLSLTLGLLSPVHA. Positions 28 to 165 are A1; the sequence is APDTSVSNKQ…NIKVIIDFAP (138 aa). Residues Asp54, Asn56, Asn59, and Asn60 each contribute to the Ca(2+) site. Residues Cys70 and Cys77 are joined by a disulfide bond. Ca(2+) contacts are provided by Gly78 and Asp80. 127-128 is a binding site for substrate; the sequence is YW. Ca(2+) is bound at residue Asn166. The interval 166–229 is b; sequence NHTSPASSDD…NLYDLADLNH (64 aa). Residue His167 participates in substrate binding. Residue Ile217 coordinates Ca(2+). 220-223 contacts substrate; sequence NLYD. Position 226 (Asp226) interacts with Ca(2+). Positions 230 to 433 are A2; the sequence is NNSSVDVYLK…LRKSNPAIAY (204 aa). Arg254 is a substrate binding site. Asp256 functions as the Nucleophile in the catalytic mechanism. Residue 259–260 participates in substrate binding; the sequence is KH. His260 is a binding site for Ca(2+). The Proton donor role is filled by Glu284. Substrate contacts are provided by His354, Asp398, and Arg402. The interval 434-522 is c; that stretch reads GSTQERWINN…GTAVWQYTTD (89 aa). Residues 523-608 form a d region; the sequence is ATAPINGNVG…SNIYDNFEVL (86 aa). An IPT/TIG domain is found at 526-606; that stretch reads PINGNVGPMM…AASNIYDNFE (81 aa). The region spanning 607–712 is the CBM20 domain; it reads VLTGDQVTVR…TATVNVNWQP (106 aa). The segment at 609 to 712 is e; it reads TGDQVTVRFV…TATVNVNWQP (104 aa).

The protein belongs to the glycosyl hydrolase 13 family. Monomer. Ca(2+) serves as cofactor.

Its subcellular location is the secreted. The enzyme catalyses Cyclizes part of a (1-&gt;4)-alpha-D-glucan chain by formation of a (1-&gt;4)-alpha-D-glucosidic bond.. This chain is Cyclomaltodextrin glucanotransferase (cgt), found in Bacillus sp. (strain 38-2).